The sequence spans 177 residues: SKP1-like protein 15 (177 aa).

The interval 108 to 167 (ILAANYLNVEGLLGLTCQTVADYIKDKTPEEVRELFNIENDFTHEEEEEAIRKENAWAFE) is interaction with the F-box domain of F-box proteins.

Belongs to the SKP1 family. In terms of assembly, part of a SCF (SKP1-cullin-F-box) protein ligase complex. In terms of tissue distribution, expressed at low levels in seedlings and leaves.

Its subcellular location is the nucleus. It participates in protein modification; protein ubiquitination. Involved in ubiquitination and subsequent proteasomal degradation of target proteins. Together with CUL1, RBX1 and a F-box protein, it forms a SCF E3 ubiquitin ligase complex. The functional specificity of this complex depends on the type of F-box protein. In the SCF complex, it serves as an adapter that links the F-box protein to CUL1. The polypeptide is SKP1-like protein 15 (ASK15) (Arabidopsis thaliana (Mouse-ear cress)).